The chain runs to 135 residues: Transcription antitermination protein NusB (135 aa).

The protein belongs to the NusB family.

Its function is as follows. Involved in transcription antitermination. Required for transcription of ribosomal RNA (rRNA) genes. Binds specifically to the boxA antiterminator sequence of the ribosomal RNA (rrn) operons. The chain is Transcription antitermination protein NusB from Lacticaseibacillus casei (strain BL23) (Lactobacillus casei).